The chain runs to 280 residues: Urease accessory protein UreD (280 aa).

This sequence belongs to the UreD family. In terms of assembly, ureD, UreF and UreG form a complex that acts as a GTP-hydrolysis-dependent molecular chaperone, activating the urease apoprotein by helping to assemble the nickel containing metallocenter of UreC. The UreE protein probably delivers the nickel.

The protein localises to the cytoplasm. Its function is as follows. Required for maturation of urease via the functional incorporation of the urease nickel metallocenter. The chain is Urease accessory protein UreD from Pseudomonas aeruginosa (strain UCBPP-PA14).